Consider the following 855-residue polypeptide: DNA mismatch repair protein MutS (855 aa).

613–620 (GPNMGGKS) serves as a coordination point for ATP.

The protein belongs to the DNA mismatch repair MutS family.

This protein is involved in the repair of mismatches in DNA. It is possible that it carries out the mismatch recognition step. This protein has a weak ATPase activity. The sequence is that of DNA mismatch repair protein MutS from Azotobacter vinelandii (strain DJ / ATCC BAA-1303).